Consider the following 736-residue polypeptide: Polyribonucleotide nucleotidyltransferase (736 aa).

The Mg(2+) site is built by Asp518 and Asp524. Positions 584–644 (PSLQIFSINP…QKVEAAKEHI (61 aa)) constitute a KH domain. Residues 665–732 (GEVFKGKVKK…NKNKVELGRA (68 aa)) form the S1 motif domain.

It belongs to the polyribonucleotide nucleotidyltransferase family. It depends on Mg(2+) as a cofactor.

Its subcellular location is the cytoplasm. It catalyses the reaction RNA(n+1) + phosphate = RNA(n) + a ribonucleoside 5'-diphosphate. In terms of biological role, involved in mRNA degradation. Catalyzes the phosphorolysis of single-stranded polyribonucleotides processively in the 3'- to 5'-direction. In Wolinella succinogenes (strain ATCC 29543 / DSM 1740 / CCUG 13145 / JCM 31913 / LMG 7466 / NCTC 11488 / FDC 602W) (Vibrio succinogenes), this protein is Polyribonucleotide nucleotidyltransferase.